A 378-amino-acid chain; its full sequence is Putative odorant receptor 71a (378 aa).

Residues 1-37 lie on the Cytoplasmic side of the membrane; sequence MDYDRIRPVRFLTGVLKWWRLWPRKESVSTPDWTNWQ. A helical membrane pass occupies residues 38–58; it reads AYALHVPFTFLFVLLLWLEAI. Residues 59–66 lie on the Extracellular side of the membrane; the sequence is KSRDIQHT. A helical transmembrane segment spans residues 67–87; that stretch reads ADVLLICLTTTALGGKVINIW. Topologically, residues 88 to 127 are cytoplasmic; sequence KYAHVAQGILSEWSTWDLFELRSKQEVDMWRFEHRRFNRV. The helical transmembrane segment at 128-148 threads the bilayer; it reads FMFYCLCSAGVIPFIVIQPLF. At 149–166 the chain is on the extracellular side; the sequence is DIPNRLPFWMWTPFDWQQ. The chain crosses the membrane as a helical span at residues 167 to 187; it reads PVLFWYAFIYQATTIPIACAC. Over 188–255 the chain is Cytoplasmic; that stretch reads NVTMDAVNWY…IFISKSTFTQ (68 aa). A helical transmembrane segment spans residues 256–276; the sequence is ILVSSLIICFTIYSMQMSPVL. Topologically, residues 277 to 280 are extracellular; it reads QDLP. Residues 281–301 traverse the membrane as a helical segment; it reads GFAAMMQYLVAMIMQVMLPTI. Residues 302-343 lie on the Cytoplasmic side of the membrane; sequence YGNAVIDSANMLTDSMYNSDWPDMNCRMRRLVLMFMVYLNRP. A helical transmembrane segment spans residues 344 to 364; the sequence is VTLKAGGFFHIGLPLFTKTMN. Residues 365 to 378 lie on the Extracellular side of the membrane; that stretch reads QAYSLLALLLNMNQ.

This sequence belongs to the insect chemoreceptor superfamily. Heteromeric odorant receptor channel (TC 1.A.69) family. Or2a subfamily. As to quaternary structure, interacts with Orco. Complexes exist early in the endomembrane system in olfactory sensory neurons (OSNs), coupling these complexes to the conserved ciliary trafficking pathway. As to expression, expressed in olfactory sensory neurons in the maxillary palp.

The protein resides in the cell membrane. Functionally, odorant receptor which mediates acceptance or avoidance behavior, depending on its substrates. The odorant receptor repertoire encodes a large collection of odor stimuli that vary widely in identity, intensity, and duration. May form a complex with Orco to form odorant-sensing units, providing sensitive and prolonged odorant signaling and calcium permeability. The chain is Putative odorant receptor 71a (Or71a) from Drosophila melanogaster (Fruit fly).